The primary structure comprises 165 residues: UPF0669 protein v1g209471 (165 aa).

The signal sequence occupies residues Met1–Cys23. N-linked (GlcNAc...) asparagine glycosylation occurs at Asn38.

This sequence belongs to the UPF0669 family.

The protein localises to the secreted. This Nematostella vectensis (Starlet sea anemone) protein is UPF0669 protein v1g209471.